Consider the following 738-residue polypeptide: Putative cyclic nucleotide-gated ion channel 7 (738 aa).

Topologically, residues 1-104 (MYKSQYISGQ…DKTLLVWNRL (104 aa)) are cytoplasmic. Residues 105-125 (FVISCILAVSVDPLFFYLPIV) traverse the membrane as a helical segment. At 126–139 (DNSGSSCIGIDTKL) the chain is on the extracellular side. A helical membrane pass occupies residues 140 to 160 (AVTTTTLRTIVDVFYLTRMAL). At 161–193 (QFRTAYIAPSSRVFGRGELVIDPAKIAERYLTR) the chain is on the cytoplasmic side. A helical membrane pass occupies residues 194 to 214 (YFVVDFLAVLPLPQIAVWKFL). The Extracellular portion of the chain corresponds to 215 to 227 (HGSKGSDVLPTKT). A helical transmembrane segment spans residues 228–248 (ALLNIVIVQYIPRFVRFIPLT). The Cytoplasmic portion of the chain corresponds to 249–268 (SELKKTAGAFAEGAWAGAAY). The chain crosses the membrane as a helical span at residues 269–289 (YLLWYMLASHITGAFWYMLSV). At 290–395 (ERNDTCWRFA…GQGLQTSTFP (106 aa)) the chain is on the extracellular side. A helical transmembrane segment spans residues 396-416 (GEVLFSIAIAIAGLLLFALLI). Topologically, residues 417-738 (GNMQTYLQSL…KPPEPDFDAE (322 aa)) are cytoplasmic. A nucleoside 3',5'-cyclic phosphate contacts are provided by residues 502–632 (LFAN…TFRF) and Glu-573. The segment at 618-633 (FRRLHSRQVQQTFRFY) is calmodulin-binding. In terms of domain architecture, IQ spans 638–667 (RTWASCFIQAAWRRYSRRKNAELRRIEEKE). 2 disordered regions span residues 671–693 (GYEDEYDDESDKRPMVITRSESS) and 715–738 (LRSSESSKTLINLQKPPEPDFDAE).

This sequence belongs to the cyclic nucleotide-gated cation channel (TC 1.A.1.5) family. In terms of assembly, homotetramer or heterotetramer.

The protein localises to the cell membrane. In terms of biological role, putative cyclic nucleotide-gated ion channel. This chain is Putative cyclic nucleotide-gated ion channel 7 (CNGC7), found in Arabidopsis thaliana (Mouse-ear cress).